Here is a 278-residue protein sequence, read N- to C-terminus: 4-deoxy-L-threo-5-hexosulose-uronate ketol-isomerase (278 aa).

Zn(2+) is bound by residues His196, His198, Glu203, and His245.

Belongs to the KduI family. As to quaternary structure, homohexamer. Zn(2+) serves as cofactor.

It carries out the reaction 5-dehydro-4-deoxy-D-glucuronate = 3-deoxy-D-glycero-2,5-hexodiulosonate. It functions in the pathway glycan metabolism; pectin degradation; 2-dehydro-3-deoxy-D-gluconate from pectin: step 4/5. In terms of biological role, catalyzes the isomerization of 5-dehydro-4-deoxy-D-glucuronate to 3-deoxy-D-glycero-2,5-hexodiulosonate. The sequence is that of 4-deoxy-L-threo-5-hexosulose-uronate ketol-isomerase from Escherichia coli (strain K12 / MC4100 / BW2952).